Reading from the N-terminus, the 243-residue chain is ATP synthase subunit a (243 aa).

Transmembrane regions (helical) follow at residues 29 to 49 (NASL…YIGL), 54 to 74 (IIPN…VSTI), 89 to 109 (VFTI…PLGF), 114 to 134 (HIAV…IIGF), 144 to 164 (ILLP…IELF), 182 to 202 (IAGH…NIFL), and 208 to 228 (IFII…AYIF).

This sequence belongs to the ATPase A chain family. F-type ATPases have 2 components, CF(1) - the catalytic core - and CF(0) - the membrane proton channel. CF(1) has five subunits: alpha(3), beta(3), gamma(1), delta(1), epsilon(1). CF(0) has three main subunits: a(1), b(2) and c(9-12). The alpha and beta chains form an alternating ring which encloses part of the gamma chain. CF(1) is attached to CF(0) by a central stalk formed by the gamma and epsilon chains, while a peripheral stalk is formed by the delta and b chains.

It is found in the cell inner membrane. Functionally, key component of the proton channel; it plays a direct role in the translocation of protons across the membrane. The polypeptide is ATP synthase subunit a (Ehrlichia canis (strain Jake)).